A 128-amino-acid polypeptide reads, in one-letter code: 14 kDa zinc-binding protein (128 aa).

Residues 18 to 128 (IFDKIIKKEI…GGRQMNWPPG (111 aa)) form the HIT domain. A Histidine triad motif motif is present at residues 112-116 (HIHVH).

As to quaternary structure, homodimer.

This Zea mays (Maize) protein is 14 kDa zinc-binding protein (ZBP14).